We begin with the raw amino-acid sequence, 1083 residues long: Neisserial autotransporter lipoprotein NalP (1083 aa).

A signal peptide spans 1–27 (MRTTPTFPTKTFKPTAMALAVATTLSA). A lipid anchor (N-palmitoyl cysteine) is attached at C28. The S-diacylglycerol cysteine moiety is linked to residue C28. One can recognise a Peptidase S8 domain in the interval 111–483 (NDAYKNLINL…WGLLDAGKAM (373 aa)). Residues D139, H211, and S427 each act as charge relay system in the active site. Residues 809-1083 (DGLDHNGTGL…SGRVGVGYRF (275 aa)) enclose the Autotransporter domain. Beta stranded transmembrane passes span 819-828 (RVIAQTQQDG), 844-852 (TQTVGIAAK), 858-866 (TAAATLGMG), 883-891 (SLFAGIRHD), 897-906 (YLKGLFSYGR), 931-941 (QLGALGGVNVP), 948-958 (LTVEGGLRYDL), 984-994 (VGLAGLKLSQP), 1000-1010 (VLFATAGVERD), 1041-1052 (RLVAGLGADVEF), 1057-1066 (NGLARYSYAG), and 1074-1083 (SGRVGVGYRF).

It belongs to the peptidase S8 family. A fusion protein of the first 44 residues with beta-lactamase is lipidated in E.coli, strongly suggesting this is a lipoprotein in situ. The lipidated form is briefly retained on the cell surface which allows it to process its endogenous substrates on the cell surface before the passenger domain is released into the medium.

It is found in the cell outer membrane. The protein resides in the cell surface. Its subcellular location is the secreted. Functionally, major human immunogenic protein. Autotransporter with a secreted protease domain involved in processing other autotransporter proteins including App and IgA. Probably autoprocesses to release the about 70 kDa passenger domain. Processes the lactoferrin receptor lipoprotein subunit (LbpB) extracellularly, releasing it from the cell surface. LbpB release protects bacteria against complement-mediated killing by anti-LbpB antibodies. Processes NHBA. Lipidation slows its auto-processing, probably allowing it to act on endogenous substrates on the cell surface before the passenger domain is released into the medium. The C-terminal beta-barrel domain inserts into the outer membrane where it probably exports the N-terminal passenger domain. Both the cell surface protein (Neisserial autotransporter lipoprotein NalP) and the passenger domain cleave human (host) complement factor C3, generating a shorter alpha chain and a longer beta chain than normal. Plays a role in extracellular-DNA (eDNA) mediated biofilm formation. In some strains (including cc32 strain H44/76 but not cc11 strain B16B6) eDNA stimulates biofilm formation. When NalP is not expressed (and no longer processes NHBA or IgA) biofilm formation increases. This is probably because the number of positively charged, DNA-binding peptides on the cell surface rises, resulting in increased biofilm formation. Its function is as follows. Cleaves human (host) complement factor C3, generating a shorter alpha chain and a longer beta chain than normal. Does not act on mouse or rabbit C3. Cleavage causes C3b degradation by human CFI and CFH, decreases deposition of C3b on the bacteria surface and probably facilitates complement escape. The chain is Neisserial autotransporter lipoprotein NalP from Neisseria meningitidis serogroup B / serotype 15 (strain H44/76).